The following is a 560-amino-acid chain: Solute carrier family 49 member A3 (560 aa).

12 helical membrane-spanning segments follow: residues 30 to 50, 70 to 90, 100 to 120, 125 to 145, 166 to 186, 192 to 212, 250 to 270, 282 to 302, 318 to 338, 341 to 361, 379 to 399, and 422 to 442; these read WVFLLAISLLNCSNATLWLSF, WLSLVYLVVSTPFGVAAIWIL, ILGAWLNFAGSVLRMVPCMVV, PFAFLMGGQSLCALAQSLVIF, LATMSNPLGVLVANVLSPVLV, IPLMLGVYTIPAGVVCLLSTI, VILAVCLGGMIGISASFSALL, GFSGLCGALFITFGILGALAL, IGLCLFSLACVPFALVSQLQG, LALAATCSLLGLFGFSVGPVA, GMIFVLGQAEGILIMLAMTAL, and VSLLLMAGLCTFFSCILAVFF. Residues 451–540 form a disordered region; sequence AESGEPPSTR…PGRLAGRVQA (90 aa). Over residues 466-481 the composition is skewed to gly residues; the sequence is ADSGPGVDRGGAGRAG.

This sequence belongs to the major facilitator superfamily.

It localises to the membrane. The sequence is that of Solute carrier family 49 member A3 from Homo sapiens (Human).